The chain runs to 793 residues: Ent-copalyl diphosphate synthase, chloroplastic (793 aa).

A chloroplast-targeting transit peptide spans 1–47 (MPLASNPVAFLPSSTAHGDLPAAAFSRSSAGCLQLCRPLTPTSSLQC). Residues aspartate 372 and aspartate 374 each coordinate Mg(2+). Residues 372 to 375 (DIDD) carry the DXDD motif motif.

This sequence belongs to the terpene synthase family. It depends on Mg(2+) as a cofactor.

The protein localises to the plastid. Its subcellular location is the chloroplast. It catalyses the reaction (2E,6E,10E)-geranylgeranyl diphosphate = ent-copalyl diphosphate. The protein operates within plant hormone biosynthesis; gibberellin biosynthesis. In terms of biological role, catalyzes the conversion of geranylgeranyl diphosphate (GGPP) to the gibberellin precursor ent-copalyl diphosphate (CPP). In Salvia miltiorrhiza (Chinese sage), this protein is Ent-copalyl diphosphate synthase, chloroplastic.